Here is a 330-residue protein sequence, read N- to C-terminus: Transcription factor zip1 (330 aa).

The segment covering Ser-133–Glu-148 has biased composition (basic and acidic residues). Disordered regions lie at residues Ser-133–Ser-165 and Pro-238–Ala-277. The segment covering Lys-150–Ser-165 has biased composition (low complexity). The span at Lys-244 to Ile-262 shows a compositional bias: polar residues. One can recognise a bZIP domain in the interval Thr-264 to Thr-327. Residues Lys-270–Lys-288 form a basic motif region. Positions Leu-292 to Leu-320 are leucine-zipper.

The protein belongs to the bZIP family. In terms of assembly, interacts with pof1.

It localises to the nucleus. Mediates cell growth arrest in response to cadmium exposure, which is essential to maintain cell viability. Regulates cadmium stress specific genes. The protein is Transcription factor zip1 (zip1) of Schizosaccharomyces pombe (strain 972 / ATCC 24843) (Fission yeast).